The primary structure comprises 82 residues: Sigma-G-dependent sporulation-specific SASP protein (82 aa).

This Bacillus subtilis (strain 168) protein is Sigma-G-dependent sporulation-specific SASP protein.